The primary structure comprises 348 residues: MFGFGHHGHHGQDQPPQHHGGGGGGAHQPTFKIFCRADEGYCVAVREGNVVLAPTNPRDEHQHWYKDMRFSAKIKDEEGNPAFALVNKATGLAIKHSLGQGHPVKLAPFNPEYPDESVLWTESGDVGKSFRCIRMLNNIRLNFDAFHGDKDHGGVHDGTTIVLWEWAKGDNQCWKILPWGDEAYAGGSANAPRGGNEPTVRIFCKADEGFSVTVRGGSVCLAPTNPRDEYQHWIKDMRHSNSIKDEEGYPAFALVNRVTGEAIKHSQGEGHPVKLVPYNPGYQDESVLWTESRDVGHGFRCIRMVNNIYLNFDALHGDKDHGGVRDGTTVALWKWCEGDNQRWKIVPW.

Residues M1 to A26 form a disordered region. A Ricin B-type lectin domain is found at T199–I345.

In terms of tissue distribution, expressed in roots and shoots.

In terms of biological role, lectin which binds carbohydrates in vitro. Interacts through its lectin domain with glycan structures containing specific motifs. This is Ricin B-like lectin R40C1 from Oryza sativa subsp. japonica (Rice).